A 526-amino-acid polypeptide reads, in one-letter code: ATP synthase subunit alpha (526 aa).

171 to 178 (GDRQVGKT) provides a ligand contact to ATP.

This sequence belongs to the ATPase alpha/beta chains family. F-type ATPases have 2 components, CF(1) - the catalytic core - and CF(0) - the membrane proton channel. CF(1) has five subunits: alpha(3), beta(3), gamma(1), delta(1), epsilon(1). CF(0) has three main subunits: a(1), b(2) and c(9-12). The alpha and beta chains form an alternating ring which encloses part of the gamma chain. CF(1) is attached to CF(0) by a central stalk formed by the gamma and epsilon chains, while a peripheral stalk is formed by the delta and b chains.

The protein resides in the cell inner membrane. The enzyme catalyses ATP + H2O + 4 H(+)(in) = ADP + phosphate + 5 H(+)(out). Its function is as follows. Produces ATP from ADP in the presence of a proton gradient across the membrane. The alpha chain is a regulatory subunit. The sequence is that of ATP synthase subunit alpha from Azobacteroides pseudotrichonymphae genomovar. CFP2.